A 303-amino-acid polypeptide reads, in one-letter code: Probable endonuclease 4 (303 aa).

The Zn(2+) site is built by His-78, His-118, Glu-154, Asp-188, His-191, His-222, Asp-235, His-237, and Glu-267.

It belongs to the AP endonuclease 2 family. Zn(2+) serves as cofactor.

It carries out the reaction Endonucleolytic cleavage to 5'-phosphooligonucleotide end-products.. Its function is as follows. Endonuclease IV plays a role in DNA repair. It cleaves phosphodiester bonds at apurinic or apyrimidinic (AP) sites, generating a 3'-hydroxyl group and a 5'-terminal sugar phosphate. This chain is Probable endonuclease 4, found in Mycoplasmoides gallisepticum (strain R(low / passage 15 / clone 2)) (Mycoplasma gallisepticum).